The primary structure comprises 777 residues: MLPRPLRLLLDTSPPGGVVLSSFRSRDPEEGGGPGGLVVGGGQEEEEEEEEEAPVSVWDEEEDGAVFTVTSRQYRPLDPLVPMPPPRSSRRLRAGTLEALVRHLLDTRTSGTDVSFMSAFLATHRAFTSTPALLGLMADRLEALESHPTDELERTTEVAISVLSTWLASHPEDFGSEAKGQLDRLESFLLQTGYAAGKGVGGGSADLIRNLRSRVDPQAPDLPKPLALPGDPPADPTDVLVFLADHLAEQLTLLDAELFLNLIPSQCLGGLWGHRDRPGHSHLCPSVRATVTQFNKVAGAVVSSVLGATSTGEGPGEVTIRPLRPPQRARLLEKWIRVAEECRLLRNFSSVYAVVSALQSSPIHRLRAAWGEATRDSLRVFSSLCQIFSEEDNYSQSRELLVQEVKLQSPLEPHSKKAPRSGSRGGGVVPYLGTFLKDLVMLDAASKDELENGYINFDKRRKEFAVLSELRRLQNECRGYNLQPDHDIQRWLQGLRPLTEAQSHRVSCEVEPPGSSDPPAPRVLRPTLVISQWTEVLGSVGVPTPLVSCDRPSTGGDEAPTTPAPLLTRLAQHMKWPSVSSLDSALESSPSLHSPADPSHLSPPASSPRPSRGHRRSASCGSPLSGGAEEASGGTGYGGEGSGPGASDCRIIRVQMELGEDGSVYKSILVTSQDKAPSVISRVLKKNNRDSAVASEYELVQLLPGERELTIPASANVFYAMDGASHDFLLRQRRRSSTATPGVTSGPSASGTPPSEGGGGSFPRIKATGRKIARALF.

A disordered region spans residues 1-54 (MLPRPLRLLLDTSPPGGVVLSSFRSRDPEEGGGPGGLVVGGGQEEEEEEEEEAP). Ser-13 is modified (phosphoserine). Residues 31 to 42 (GGGPGGLVVGGG) are compositionally biased toward gly residues. Residues 43 to 54 (QEEEEEEEEEAP) are compositionally biased toward acidic residues. One can recognise an N-terminal Ras-GEF domain in the interval 88–212 (SSRRLRAGTL…GSADLIRNLR (125 aa)). The 271-residue stretch at 243 to 513 (LADHLAEQLT…HRVSCEVEPP (271 aa)) folds into the Ras-GEF domain. Residue Ser-409 is modified to Phosphoserine. Composition is skewed to low complexity over residues 581–610 (SLDS…SPRP) and 618–632 (ASCG…EEAS). Disordered regions lie at residues 581–644 (SLDS…GSGP) and 734–766 (RRSS…PRIK). The segment covering 633–644 (GGTGYGGEGSGP) has biased composition (gly residues). The Ras-associating domain occupies 648–735 (DCRIIRVQME…HDFLLRQRRR (88 aa)). Residues 740-755 (TPGVTSGPSASGTPPS) show a composition bias toward low complexity.

As to quaternary structure, interacts with SAMD9.

Functionally, probable guanine nucleotide exchange factor. Putative effector of Ras and/or Rap. Associates with the GTP-bound form of Rap 1A and H-Ras in vitro. In Homo sapiens (Human), this protein is Ral guanine nucleotide dissociation stimulator-like 2 (RGL2).